The sequence spans 397 residues: Tryptophan synthase beta chain (397 aa).

At lysine 87 the chain carries N6-(pyridoxal phosphate)lysine.

The protein belongs to the TrpB family. Tetramer of two alpha and two beta chains. Pyridoxal 5'-phosphate serves as cofactor.

The enzyme catalyses (1S,2R)-1-C-(indol-3-yl)glycerol 3-phosphate + L-serine = D-glyceraldehyde 3-phosphate + L-tryptophan + H2O. The protein operates within amino-acid biosynthesis; L-tryptophan biosynthesis; L-tryptophan from chorismate: step 5/5. In terms of biological role, the beta subunit is responsible for the synthesis of L-tryptophan from indole and L-serine. The protein is Tryptophan synthase beta chain of Shigella boydii serotype 18 (strain CDC 3083-94 / BS512).